Reading from the N-terminus, the 657-residue chain is UvrABC system protein B (657 aa).

In terms of domain architecture, Helicase ATP-binding spans 23–414 (KSIKKGNKYQ…KENIFHQIMR (392 aa)). 36–43 (GVTGSGKT) provides a ligand contact to ATP. The Beta-hairpin motif lies at 89–112 (YYDYYQPEAYIPRTDVFIEKDSST). Residues 431–593 (QVEILFDEAK…ITPTSVKRHI (163 aa)) form the Helicase C-terminal domain. A UVR domain is found at 622-657 (AKLAKELRKQMLEAAKALEFEKAAAIRDEINKLRDL).

Belongs to the UvrB family. Forms a heterotetramer with UvrA during the search for lesions. Interacts with UvrC in an incision complex.

Its subcellular location is the cytoplasm. In terms of biological role, the UvrABC repair system catalyzes the recognition and processing of DNA lesions. A damage recognition complex composed of 2 UvrA and 2 UvrB subunits scans DNA for abnormalities. Upon binding of the UvrA(2)B(2) complex to a putative damaged site, the DNA wraps around one UvrB monomer. DNA wrap is dependent on ATP binding by UvrB and probably causes local melting of the DNA helix, facilitating insertion of UvrB beta-hairpin between the DNA strands. Then UvrB probes one DNA strand for the presence of a lesion. If a lesion is found the UvrA subunits dissociate and the UvrB-DNA preincision complex is formed. This complex is subsequently bound by UvrC and the second UvrB is released. If no lesion is found, the DNA wraps around the other UvrB subunit that will check the other stand for damage. This Campylobacter jejuni (strain RM1221) protein is UvrABC system protein B.